A 360-amino-acid chain; its full sequence is Peptide chain release factor 1 (360 aa).

Q235 carries the post-translational modification N5-methylglutamine.

Belongs to the prokaryotic/mitochondrial release factor family. Methylated by PrmC. Methylation increases the termination efficiency of RF1.

The protein resides in the cytoplasm. Functionally, peptide chain release factor 1 directs the termination of translation in response to the peptide chain termination codons UAG and UAA. This chain is Peptide chain release factor 1, found in Janthinobacterium sp. (strain Marseille) (Minibacterium massiliensis).